The following is an 842-amino-acid chain: Glycogen phosphorylase, muscle form (842 aa).

Ser-2 bears the N-acetylserine mark. Ser-15 is subject to Phosphoserine; by PHK; in form phosphorylase A. The AMP site is built by Asp-43 and Tyr-76. A phosphotyrosine mark is found at Tyr-204 and Tyr-227. 310 to 319 (RRFKSSKFGC) contacts AMP. At Ser-430 the chain carries Phosphoserine. Tyr-473 carries the post-translational modification Phosphotyrosine. Ser-514 carries the phosphoserine modification. Lys-681 carries the post-translational modification N6-(pyridoxal phosphate)lysine. Phosphoserine occurs at positions 747 and 748.

The protein belongs to the glycogen phosphorylase family. Homodimer. Homotetramer; to form the enzymatically active phosphorylase A. Requires pyridoxal 5'-phosphate as cofactor. Phosphorylation of Ser-15 converts phosphorylase B (unphosphorylated) to phosphorylase A.

It catalyses the reaction [(1-&gt;4)-alpha-D-glucosyl](n) + phosphate = [(1-&gt;4)-alpha-D-glucosyl](n-1) + alpha-D-glucose 1-phosphate. Allosterically regulated through the non-covalent binding of metabolites, being activated by AMP and inhibited by ATP, ADP, and glucose-6-phosphate. The activity is also controlled by post-translational modifications including phosphorylation. Allosteric enzyme that catalyzes the rate-limiting step in glycogen catabolism, the phosphorolytic cleavage of glycogen to produce glucose-1-phosphate, and plays a central role in maintaining cellular and organismal glucose homeostasis. This Homo sapiens (Human) protein is Glycogen phosphorylase, muscle form.